The sequence spans 502 residues: Cytochrome P450 81D1 (502 aa).

A helical membrane pass occupies residues 6 to 26; it reads IRVVLYSIFSLIFLIISFKFL. C440 is a binding site for heme.

It belongs to the cytochrome P450 family. It depends on heme as a cofactor.

The protein resides in the membrane. The sequence is that of Cytochrome P450 81D1 (CYP81D1) from Arabidopsis thaliana (Mouse-ear cress).